Consider the following 529-residue polypeptide: Ribonuclease Y (529 aa).

The chain crosses the membrane as a helical span at residues 4–24; the sequence is GLIYISLEVIVACLISALAMY. A KH domain is found at 216-297; sequence FTNRIALPCS…NRIEEVYHRV (82 aa). Residues 342-435 form the HD domain; sequence ALQHSKEVAL…VCAADALSAG (94 aa).

This sequence belongs to the RNase Y family.

It is found in the cell membrane. In terms of biological role, endoribonuclease that initiates mRNA decay. The protein is Ribonuclease Y of Helicobacter acinonychis (strain Sheeba).